Reading from the N-terminus, the 230-residue chain is 2,3-bisphosphoglycerate-dependent phosphoglycerate mutase (230 aa).

Residues 8–15, 21–22, R60, 87–90, K98, 114–115, and 183–184 each bind substrate; these read RHGESEWN, TG, ERHY, RR, and GN. The active-site Tele-phosphohistidine intermediate is H9. Catalysis depends on E87, which acts as the Proton donor/acceptor.

It belongs to the phosphoglycerate mutase family. BPG-dependent PGAM subfamily.

It carries out the reaction (2R)-2-phosphoglycerate = (2R)-3-phosphoglycerate. Its pathway is carbohydrate degradation; glycolysis; pyruvate from D-glyceraldehyde 3-phosphate: step 3/5. Functionally, catalyzes the interconversion of 2-phosphoglycerate and 3-phosphoglycerate. This Streptococcus sanguinis (strain SK36) protein is 2,3-bisphosphoglycerate-dependent phosphoglycerate mutase.